A 215-amino-acid chain; its full sequence is MASKVEKTHALPPCCSTESLISSIGLGIFCLVADRLLRFPIIQHNDWLRAISDNIVHGVIGMWSWAVVTGIRKKSDFGEVLLAGFLASVIDVDHFFQARSLSLQAALTLPRRPFLHCSTVIPIAVLSVKLAVHLFKLRDSWRFLPWMILVSWTSHHIRDGIRHGLWICPFGKTPPLPSSFYVISTLSLPHLCSFLMYLTGTRQTVSSKYGMRIDV.

Helical transmembrane passes span 77–97, 114–134, and 178–198; these read FGEVLLAGFLASVIDVDHFFQ, FLHCSTVIPIAVLSVKLAVHL, and SSFYVISTLSLPHLCSFLMYL.

It localises to the membrane. This chain is Transmembrane protein 267, found in Mus musculus (Mouse).